The primary structure comprises 255 residues: 3-oxoacyl-[acyl-carrier-protein] reductase MabA (255 aa).

NADP(+) contacts are provided by residues 32-35, Arg-55, 69-70, Gly-98, Tyr-161, Lys-165, Ile-194, and Arg-205; these read NRGI and DV. Residue Tyr-161 is the Proton acceptor of the active site.

Belongs to the short-chain dehydrogenases/reductases (SDR) family. As to quaternary structure, homotetramer.

It localises to the secreted. The protein resides in the cell wall. It carries out the reaction a (3R)-hydroxyacyl-[ACP] + NADP(+) = a 3-oxoacyl-[ACP] + NADPH + H(+). It catalyses the reaction a (3R)-3-hydroxyacyl-CoA + NADP(+) = a 3-oxoacyl-CoA + NADPH + H(+). The enzyme catalyses (3R)-3-hydroxybutanoyl-CoA + NADP(+) = acetoacetyl-CoA + NADPH + H(+). The catalysed reaction is (3R)-hydroxyoctanoyl-CoA + NADP(+) = 3-oxooctanoyl-CoA + NADPH + H(+). Its pathway is lipid metabolism; mycolic acid biosynthesis. In terms of biological role, part of the mycobacterial fatty acid elongation system FAS-II, which is involved in mycolic acid biosynthesis. Catalyzes the NADPH-dependent reduction of beta-ketoacyl derivatives, the second step of the FAS-II elongation cycle. Has a preference for longer substrates. Can use CoA derivatives as substrates in vitro. This chain is 3-oxoacyl-[acyl-carrier-protein] reductase MabA, found in Mycolicibacterium smegmatis (strain ATCC 700084 / mc(2)155) (Mycobacterium smegmatis).